Reading from the N-terminus, the 183-residue chain is Adenine phosphoribosyltransferase (183 aa).

The protein belongs to the purine/pyrimidine phosphoribosyltransferase family. As to quaternary structure, homodimer.

It is found in the cytoplasm. It catalyses the reaction AMP + diphosphate = 5-phospho-alpha-D-ribose 1-diphosphate + adenine. Its pathway is purine metabolism; AMP biosynthesis via salvage pathway; AMP from adenine: step 1/1. In terms of biological role, catalyzes a salvage reaction resulting in the formation of AMP, that is energically less costly than de novo synthesis. The polypeptide is Adenine phosphoribosyltransferase (Cronobacter sakazakii (strain ATCC BAA-894) (Enterobacter sakazakii)).